Reading from the N-terminus, the 2497-residue chain is Polyprotein P1234 (2497 aa).

The Alphavirus-like MT domain maps to 28–259 (EAKQVTDNDH…EKRDLLRSWH (232 aa)). Positions 244–263 (GSTIYHEKRDLLRSWHLPSV) are nsP1 membrane-binding. The S-palmitoyl cysteine; by host moiety is linked to residue C419. In terms of domain architecture, (+)RNA virus helicase ATP-binding spans 690 to 841 (ELVDPPFHEF…HEICTQVFHK (152 aa)). Residue 721-728 (GVPGSGKS) participates in a ribonucleoside 5'-triphosphate binding. Residues 842–990 (SISRRCTKSV…MEEWQAEHDA (149 aa)) enclose the (+)RNA virus helicase C-terminal domain. The region spanning 1003 to 1322 (DVFQNKANVC…STLTNIYTGS (320 aa)) is the Peptidase C9 domain. Residues 1004–1023 (VFQNKANVCWAKALVPVLKT) are nucleolus localization signal. C1012 serves as the catalytic For cysteine protease nsP2 activity. The short motif at 1056-1065 (VRFFGLDLDS) is the Nuclear export signal element. H1081 (for cysteine protease nsP2 activity) is an active-site residue. Positions 1179-1183 (SGKTV) match the Nuclear localization signal motif. The Macro domain occupies 1328-1489 (GCAPSYHVVR…TLKEVVARRE (162 aa)). The ADP-D-ribose site is built by D1339, N1353, G1361, G1441, I1442, and F1443. Positions 1596, 1598, 1621, and 1639 each coordinate Zn(2+). Disordered regions lie at residues 1774 to 1806 (IPRP…SVDS) and 1827 to 1865 (APRT…NPPG). The interval 1856–1877 (RSSLASNPPGVNRVITREEFEA) is binding to host FXR family members. One can recognise a RdRp catalytic domain in the interval 2254–2369 (DWVLETDIAS…KGVKSDKLMA (116 aa)).

In terms of assembly, interacts with non-structural protein 3. Interacts with RNA-directed RNA polymerase nsP4. Interacts with protease nsP2. interacts with itself. As to quaternary structure, interacts with mRNA-capping enzyme nsP1. Interacts with host DDX1. Interacts with host DDX3. Interacts (via C-terminus) with host FXR1; this interaction inhibits the formation of host stress granules on viral mRNAs and the nsp3-FXR1 complexes bind viral RNAs and probably orchestrate the assembly of viral replication complexes. Interacts (via C-terminus) with host FXR2; this interaction inhibits the formation of host stress granules on viral mRNAs and the nsp3-FXR2 complexes bind viral RNAs and probably orchestrate the assembly of viral replication complexes. Interacts (via C-terminus) with host FMR1; this interaction inhibits the formation of host stress granules on viral mRNAs and the nsp3-FMR1 complexes bind viral RNAs and probably orchestrate the assembly of viral replication complexes. Interacts with mRNA-capping enzyme nsP1. Interacts with protease nsP2. interacts with itself. In terms of assembly, interacts with RNA-directed RNA polymerase nsP4. Interacts with mRNA-capping enzyme nsP1. Interacts with KPNA1/karyopherin-alpha1; this interaction probably allows the active transport of protease nsP2 into the host nucleus. It depends on Mg(2+) as a cofactor. Mn(2+) serves as cofactor. In terms of processing, specific enzymatic cleavages in vivo yield mature proteins. The processing of the polyprotein is temporally regulated. In early stages (1.7 hpi), P1234 is first cleaved in trans through its nsP2 protease activity, releasing P123' and nsP4, which associate to form the early replication complex. At the same time, P1234 is also cut at the nsP1/nsP2 site early in infection but with lower efficiency. After replication of the viral minus-strand RNAs (4 hpi), the polyproteins are cut at the nsP1/nsP2 and nsP2/nsP3 sites very efficiently, preventing accumulation of P123' and P1234 and allowing the formation of the late replication complex. NsP3'/nsP4 site is not cleaved anymore and P34 is produced rather than nsP4. Post-translationally, specific enzymatic cleavages in vivo yield mature proteins. The processing of the polyprotein is temporally regulated. In early stages (1.7 hpi), P123 is cleaved at the nsP1/nsP2 site with low efficiency. After replication of the viral minus-strand RNAs (4 hpi), the polyproteins are cut at the nsP1/nsP2 and nsP2/nsP3 sites very efficiently, preventing accumulation of P123 and allowing the formation of the late replication complex. Specific enzymatic cleavages in vivo yield mature proteins. The processing of the polyprotein is temporally regulated. In early stages (1.7 hpi), P123' is cleaved at the nsP1/nsP2 site with low efficiency. After replication of the viral minus-strand RNAs (4 hpi), the polyproteins are cut at the nsP1/nsP2 and nsP2/nsP3 sites very efficiently, preventing accumulation of P123' and allowing the formation of the late replication complex. In terms of processing, palmitoylated by host palmitoyltransferases ZDHHC2 and ZDHHC19. Post-translationally, phosphorylated by host on serines and threonines. Ubiquitinated; targets the protein for rapid degradation via the ubiquitin system. Nsp4 is present in extremely low quantities due to low frequency of translation through the amber stop-codon and the degradation by the ubiquitin pathway.

It localises to the host cytoplasmic vesicle membrane. It is found in the host cell membrane. The protein resides in the host cell projection. Its subcellular location is the host filopodium. The protein localises to the host nucleus. It localises to the host cytoplasm. It carries out the reaction GTP + S-adenosyl-L-methionine = N(7)-methyl-GTP + S-adenosyl-L-homocysteine. The catalysed reaction is N(7)-methyl-GTP + L-histidyl-[protein] = N(tele)-(N(7)-methylguanosine 5'-phospho)-L-histidyl-[protein] + diphosphate. It catalyses the reaction N(tele)-(N(7)-methylguanosine 5'-phospho)-L-histidyl-[protein] + a 5'-end diphospho-(purine-ribonucleoside) in mRNA + H(+) = a 5'-end (N(7)-methyl 5'-triphosphoguanosine)-(purine-ribonucleoside) in mRNA + L-histidyl-[protein]. The enzyme catalyses a 5'-end triphospho-ribonucleoside in mRNA + H2O = a 5'-end diphospho-ribonucleoside in mRNA + phosphate + H(+). It carries out the reaction a ribonucleoside 5'-triphosphate + H2O = a ribonucleoside 5'-diphosphate + phosphate + H(+). The catalysed reaction is ATP + H2O = ADP + phosphate + H(+). It catalyses the reaction RNA(n) + a ribonucleoside 5'-triphosphate = RNA(n+1) + diphosphate. The enzyme catalyses 4-O-(ADP-D-ribosyl)-L-aspartyl-[protein] + H2O = L-aspartyl-[protein] + ADP-D-ribose + H(+). It carries out the reaction 5-O-(ADP-D-ribosyl)-L-glutamyl-[protein] + H2O = L-glutamyl-[protein] + ADP-D-ribose + H(+). The catalysed reaction is RNA(n) + ATP = RNA(n)-3'-adenine ribonucleotide + diphosphate. It catalyses the reaction ADP-alpha-D-ribose 1''-phosphate + H2O = ADP-D-ribose + phosphate. With respect to regulation, inhibited by sinefungin. In terms of biological role, inactive precursor of the viral replicase, which is activated by cleavages carried out by the viral protease nsP2. The early replication complex formed by the polyprotein P123 and nsP4 synthesizes the minus-strand RNAs (antigenome). Polyprotein P123 is a short-lived polyprotein that accumulates during early stage of infection. As soon P123 is cleaved into mature proteins, the plus-strand RNAs synthesis begins. Its function is as follows. The early replication complex formed by the polyprotein P123' and nsP4 synthesizes minus-strand RNAs (antigenome). Polyprotein P123' is a short-lived polyprotein that accumulates during early stage of infection. As soon P123' is cleaved into mature proteins, the plus-strand RNAs synthesis begins. Functionally, cytoplasmic capping enzyme that catalyzes two virus-specific reactions: methyltransferase and nsP1 guanylyltransferase. mRNA-capping is necessary since all viral RNAs are synthesized in the cytoplasm, and host capping enzymes are restricted to the nucleus. The enzymatic reaction involves a covalent link between 7-methyl-GMP and nsP1, whereas eukaryotic capping enzymes form a covalent complex only with GMP. NsP1 capping consists in the following reactions: GTP is first methylated into 7-methyl-GMP and then is covalently linked to nsP1 to form the m7GMp-nsP1 complex from which 7-methyl-GMP complex is transferred to the mRNA to create the cap structure. NsP1 is also needed for the initiation of the minus-strand RNAs synthesis. Probably serves as a membrane anchor for the replication complex composed of nsP1-nsP4. Nsp1 is needed for the initiation of the minus-strand RNAs synthesis. Palmitoylated nsP1 is remodeling host cell cytoskeleton, and induces filopodium-like structure formation at the surface of the host cell. In terms of biological role, multifunctional protein whose N-terminus is part of the RNA polymerase complex and displays NTPase, RNA triphosphatase and helicase activities. NTPase and RNA triphosphatase are involved in viral RNA capping and helicase keeps a check on the dsRNA replication intermediates. The C-terminus harbors a protease that specifically cleaves the polyproteins and releases the mature proteins. Required for the shutoff of minus-strand RNAs synthesis. Inhibits host translation to ensure maximal viral gene expression and evade host immune response. Seems to be essential for minus-strand RNAs and subgenomic 26S mRNAs synthesis. Displays mono-ADP-ribosylhydrolase activity. ADP-ribosylation is a post-translational modification that controls various processes of the host cell and the virus probably needs to revert it for optimal viral replication. Binds proteins of FXR family and sequesters them into the viral RNA replication complexes thereby inhibiting the formation of host stress granules on viral mRNAs. The nsp3-FXR complexes bind viral RNAs and probably orchestrate the assembly of viral replication complexes, thanks to the ability of FXR family members to self-assemble and bind DNA. Its function is as follows. Seems to be essential for minus-strand RNAs and subgenomic 26S mRNAs synthesis. Displays mono-ADP-ribosylhydrolase activity. ADP-ribosylation is a post-translational modification that controls various processes of the host cell and the virus probably needs to revert it for optimal viral replication. Binds proteins of FXR family and sequesters them into the viral RNA replication complexes thereby inhibiting the formation of host stress granules on viral mRNAs. The nsp3'-FXR complexes bind viral RNAs and probably orchestrate the assembly of viral replication complexes, thanks to the ability of FXR family members to self-assemble and bind DNA. Functionally, RNA dependent RNA polymerase. Replicates genomic and antigenomic RNA by recognizing replications specific signals. The early replication complex formed by the polyprotein P123 and nsP4 synthesizes minus-strand RNAs. The late replication complex composed of fully processed nsP1-nsP4 is responsible for the production of genomic and subgenomic plus-strand RNAs. This Venezuelan equine encephalitis virus (VEEV) protein is Polyprotein P1234.